We begin with the raw amino-acid sequence, 1260 residues long: Neural cell adhesion molecule L1 (1260 aa).

A signal peptide spans 1–19; sequence MVVMLRYVWPLLLCSPCLL. The Extracellular segment spans residues 20–1123; the sequence is IQIPDEYKGH…VSTTGSFASE (1104 aa). Ig-like C2-type domains follow at residues 35–130, 138–225, 239–327, 332–419, 424–506, and 517–600; these read PVIT…IQLV, PKET…EPID, PRLL…YYVT, PYWL…AYIY, PARI…NNVT, and TQIT…DEVE. Cystine bridges form between Cys57-Cys113 and Cys157-Cys208. N-linked (GlcNAc...) asparagine glycans are attached at residues Asn100, Asn202, Asn246, and Asn293. 2 disulfides stabilise this stretch: Cys263–Cys311 and Cys353–Cys403. N-linked (GlcNAc...) asparagine glycosylation is found at Asn432, Asn478, Asn489, and Asn504. An intrachain disulfide couples Cys447 to Cys496. A disulfide bridge connects residues Cys538 and Cys590. Short sequence motifs (cell attachment site) lie at residues 553–555 and 562–564; these read RGD. 2 N-linked (GlcNAc...) asparagine glycosylation sites follow: Asn587 and Asn670. Fibronectin type-III domains lie at 613 to 711, 716 to 809, 811 to 916, 919 to 1015, and 1014 to 1112; these read PVPH…TPEA, NPVD…SGED, PQVS…PEGV, HPEA…MALF, and LFGK…TGPV. The interval 697-724 is disordered; sequence GEPSPVSESVVTPEAAPEKNPVDVRGEG. Residues 712–724 are compositionally biased toward basic and acidic residues; the sequence is APEKNPVDVRGEG. Asn725, Asn776, Asn824, Asn848, Asn875, Asn968, Asn978, Asn1022, Asn1030, Asn1073, and Asn1107 each carry an N-linked (GlcNAc...) asparagine glycan. The helical transmembrane segment at 1124–1146 threads the bilayer; it reads GWFIAFVSAIILLLLILLILCFI. The Cytoplasmic portion of the chain corresponds to 1147-1260; it reads KRSKGGKYSV…SPINPAVALE (114 aa). 7 positions are modified to phosphoserine: Ser1166, Ser1181, Ser1184, Ser1197, Ser1246, Ser1247, and Ser1251. 2 disordered regions span residues 1183–1210 and 1229–1260; these read ESDN…SDDS and IGQY…VALE. The segment covering 1244–1253 has biased composition (polar residues); it reads NDSSGATSPI.

Belongs to the immunoglobulin superfamily. L1/neurofascin/NgCAM family. As to quaternary structure, interacts with SHTN1; the interaction occurs in axonal growth cones. Interacts with isoform 2 of BSG. Expressed in the brain, including in the molecular layer of the cerebellar cortex, the fiber-rich layers of the hippocampus (alveus, and strata lacunosum moleculare, radiatum, and oriens), the nerve fiber layer and the inner and outer plexiform layers of the retina, and in the molecular layer of the olfactory bulb (at protein level).

The protein resides in the cell membrane. It localises to the cell projection. Its subcellular location is the growth cone. In terms of biological role, neural cell adhesion molecule involved in the dynamics of cell adhesion and in the generation of transmembrane signals at tyrosine kinase receptors. During brain development, critical in multiple processes, including neuronal migration, axonal growth and fasciculation, and synaptogenesis. In the mature brain, plays a role in the dynamics of neuronal structure and function, including synaptic plasticity. The polypeptide is Neural cell adhesion molecule L1 (L1cam) (Mus musculus (Mouse)).